We begin with the raw amino-acid sequence, 42 residues long: Photosystem I reaction center subunit IX (42 aa).

Residues 8-28 (YLSTAPVLFTVWLSFTASFII) form a helical membrane-spanning segment.

Belongs to the PsaJ family.

The protein resides in the plastid. It is found in the chloroplast thylakoid membrane. In terms of biological role, may help in the organization of the PsaE and PsaF subunits. The sequence is that of Photosystem I reaction center subunit IX from Rhodomonas salina (Cryptomonas salina).